Reading from the N-terminus, the 160-residue chain is Cytochrome b6-f complex subunit 4 (160 aa).

The next 3 helical transmembrane spans lie at Leu-36–Val-56, Leu-95–Glu-115, and Ala-131–Ile-151.

It belongs to the cytochrome b family. PetD subfamily. In terms of assembly, the 4 large subunits of the cytochrome b6-f complex are cytochrome b6, subunit IV (17 kDa polypeptide, PetD), cytochrome f and the Rieske protein, while the 4 small subunits are PetG, PetL, PetM and PetN. The complex functions as a dimer.

It is found in the cellular thylakoid membrane. Functionally, component of the cytochrome b6-f complex, which mediates electron transfer between photosystem II (PSII) and photosystem I (PSI), cyclic electron flow around PSI, and state transitions. The polypeptide is Cytochrome b6-f complex subunit 4 (Rippkaea orientalis (strain PCC 8801 / RF-1) (Cyanothece sp. (strain PCC 8801))).